The primary structure comprises 518 residues: Suppressor of hairless homolog (518 aa).

The disordered stretch occupies residues 22–59 (ETDQQRSHVKERVNGTPNQNGGTSTSSKPRSVFENRPP). Over residues 24 to 34 (DQQRSHVKERV) the composition is skewed to basic and acidic residues. Residues 36–50 (GTPNQNGGTSTSSKP) show a composition bias toward polar residues. 3 consecutive DNA-binding regions follow at residues 89 to 96 (KSYGNEKR), 223 to 232 (RLRSQTVSTR), and 296 to 328 (RKVDKQTAILNADDPVSQLHKCAFYLKDSERMY). The IPT/TIG domain occupies 386-476 (PVVHSLQLNG…YPTNLTFTFT (91 aa)).

The protein belongs to the Su(H) family. Interacts with activated Notch proteins.

It is found in the nucleus. Functionally, transcriptional regulator that plays a central role in Notch signaling, a signaling pathway involved in cell-cell communication that regulates a broad spectrum of cell-fate determinations. Acts as a transcriptional repressor when it is not associated with Notch proteins. When associated with some Notch protein, it acts as a transcriptional activator that activates transcription of Notch target genes. This Halocynthia roretzi (Sea squirt) protein is Suppressor of hairless homolog (RBP-JK).